We begin with the raw amino-acid sequence, 319 residues long: Acetyl esterase (319 aa).

The short motif at 91-93 (HGG) is the Involved in the stabilization of the negatively charged intermediate by the formation of the oxyanion hole element. Residues serine 165, aspartate 262, and histidine 292 contribute to the active site.

This sequence belongs to the 'GDXG' lipolytic enzyme family. Homodimer. Interacts with MalT and MelA.

Its subcellular location is the cytoplasm. Displays esterase activity towards short chain fatty esters (acyl chain length of up to 8 carbons). Able to hydrolyze triacetylglycerol (triacetin) and tributyrylglycerol (tributyrin), but not trioleylglycerol (triolein) or cholesterol oleate. Negatively regulates MalT activity by antagonizing maltotriose binding. Inhibits MelA galactosidase activity. This chain is Acetyl esterase, found in Shigella boydii serotype 18 (strain CDC 3083-94 / BS512).